The following is a 252-amino-acid chain: Bridging integrator 3 homolog (252 aa).

One can recognise a BAR domain in the interval 8–231 (GGPKKQIVPK…VDEVQLSDAE (224 aa)). 3 coiled-coil regions span residues 17-57 (KTVE…MSKS), 119-150 (SLNM…KDKT), and 224-244 (EVQL…AELR).

Its subcellular location is the cytoplasm. The protein resides in the cytoskeleton. In terms of biological role, involved in cytokinesis and septation where it has a role in the localization of F-actin. The sequence is that of Bridging integrator 3 homolog (bin3) from Xenopus laevis (African clawed frog).